A 521-amino-acid chain; its full sequence is Bifunctional purine biosynthesis protein PurH (521 aa).

Residues 1 to 145 (MIKQALISVS…KNHRDVTVVV (145 aa)) form the MGS-like domain.

It belongs to the PurH family.

It carries out the reaction (6R)-10-formyltetrahydrofolate + 5-amino-1-(5-phospho-beta-D-ribosyl)imidazole-4-carboxamide = 5-formamido-1-(5-phospho-D-ribosyl)imidazole-4-carboxamide + (6S)-5,6,7,8-tetrahydrofolate. The catalysed reaction is IMP + H2O = 5-formamido-1-(5-phospho-D-ribosyl)imidazole-4-carboxamide. It functions in the pathway purine metabolism; IMP biosynthesis via de novo pathway; 5-formamido-1-(5-phospho-D-ribosyl)imidazole-4-carboxamide from 5-amino-1-(5-phospho-D-ribosyl)imidazole-4-carboxamide (10-formyl THF route): step 1/1. The protein operates within purine metabolism; IMP biosynthesis via de novo pathway; IMP from 5-formamido-1-(5-phospho-D-ribosyl)imidazole-4-carboxamide: step 1/1. In Burkholderia thailandensis (strain ATCC 700388 / DSM 13276 / CCUG 48851 / CIP 106301 / E264), this protein is Bifunctional purine biosynthesis protein PurH.